A 104-amino-acid polypeptide reads, in one-letter code: L-rhamnose mutarotase (104 aa).

Position 18 (tyrosine 18) interacts with substrate. The Proton donor role is filled by histidine 22. Residues tyrosine 41 and 76-77 (WW) each bind substrate.

The protein belongs to the rhamnose mutarotase family. In terms of assembly, homodimer.

The protein localises to the cytoplasm. The catalysed reaction is alpha-L-rhamnose = beta-L-rhamnose. The protein operates within carbohydrate metabolism; L-rhamnose metabolism. Involved in the anomeric conversion of L-rhamnose. This chain is L-rhamnose mutarotase, found in Burkholderia orbicola (strain MC0-3).